A 441-amino-acid polypeptide reads, in one-letter code: MYGGDEVSAIVVDLGSHTCKAGYAGEDAPKAVFPSVIGAVDGVEAMDVDVDSTKTNSNSEDSKTESEKEKSKRKLYVGSQAMSYRRDHMEVLSPIKDGIVSDWDLVDNIWEHAFKSCLMIDPTEHPMLLAEPPLNTQQQREKAAELMFEKYKVPALFMAKNPVLTSFATGRATSLVVDCGGGSTTISPVHDGYVLQKAVVSSPLGGEFLTDCLLKSLESKGIKIRPRYSFKRKEVRAGEFQVEDVDIPDTTESYKLFCQRMIVGDIKDSICRVPDTPYDDKSYSNIPTTSYELPDGQTLEIGADRFKVPDVMFNPSIVQTIPGMEKYAEMIPSVRGLPHMVMESINKCDVDIRRELYSSILLAGGTSSMQQLKERLEKDLIEESPHSARVKVLASGNTTERRFSVWIGGSILASLGSFQQMWFSKSEYEEHGASYIQRKCP.

The tract at residues 48–73 (VDVDSTKTNSNSEDSKTESEKEKSKR) is disordered. Positions 60–70 (EDSKTESEKEK) are enriched in basic and acidic residues.

This sequence belongs to the actin family. ARP4 subfamily. Component of the SWR1 chromatin-remodeling complex and of the NuA4 histone acetyltransferase complex. Interacts with the SWI/SNF complex. Interacts with EAF1A and EAF1B. In terms of tissue distribution, mostly expressed in flowers, and, to a lower extent, in roots, seedlings, leaves and siliques (at protein level).

It localises to the nucleus. It is found in the cytoplasm. Functionally, involved in several developmental processes including organization of plant organs, flowering time, anther development, flower senescence and fertility, probably by regulating the chromatin structure. The chain is Actin-related protein 4 from Arabidopsis thaliana (Mouse-ear cress).